The primary structure comprises 418 residues: Methylmalonic aciduria type A protein, mitochondrial (418 aa).

The N-terminal 65 residues, 1–65 (MPMLLPHPHQ…LLSDGLKRKL (65 aa)), are a transit peptide targeting the mitochondrion. GTP-binding positions include 150–158 (GPPGAGKST), D292, and 328–330 (SAR).

Belongs to the SIMIBI class G3E GTPase family. ArgK/MeaB subfamily. As to quaternary structure, homodimer. Interacts with MMUT (the apoenzyme form); the interaction is GTP dependent. In terms of tissue distribution, widely expressed. Highest expression is observed in liver and skeletal muscle.

It localises to the mitochondrion. The protein resides in the cytoplasm. The catalysed reaction is GTP + H2O = GDP + phosphate + H(+). Its activity is regulated as follows. GTPase activity is stimulated by MMUT. Its function is as follows. GTPase, binds and hydrolyzes GTP. Involved in intracellular vitamin B12 metabolism, mediates the transport of cobalamin (Cbl) into mitochondria for the final steps of adenosylcobalamin (AdoCbl) synthesis. Functions as a G-protein chaperone that assists AdoCbl cofactor delivery from MMAB to the methylmalonyl-CoA mutase (MMUT). Plays a dual role as both a protectase and a reactivase for MMUT. Protects MMUT from progressive inactivation by oxidation by decreasing the rate of the formation of the oxidized inactive cofactor hydroxocobalamin (OH2Cbl). Additionally acts a reactivase by promoting the replacement of OH2Cbl by the active cofactor AdoCbl, restoring the activity of MMUT in the presence and hydrolysis of GTP. The polypeptide is Methylmalonic aciduria type A protein, mitochondrial (Homo sapiens (Human)).